The following is a 359-amino-acid chain: Carbamoyl phosphate synthase arginine-specific small chain (359 aa).

The CPSase stretch occupies residues 1–168 (MKAYLVLATG…VETFEGNGPH (168 aa)). L-glutamine contacts are provided by serine 45, glycine 216, and glycine 218. Residues 168–355 (HIVLIDYGFK…IDDVAAKGRE (188 aa)) enclose the Glutamine amidotransferase type-1 domain. The active-site Nucleophile is cysteine 243. The L-glutamine site is built by leucine 244, glutamine 247, asparagine 285, and tyrosine 288. Active-site residues include histidine 328 and glutamate 330.

It belongs to the CarA family. Composed of two chains; the small (or glutamine) chain promotes the hydrolysis of glutamine to ammonia, which is used by the large (or ammonia) chain to synthesize carbamoyl phosphate. Tetramer of heterodimers (alpha,beta)4.

The catalysed reaction is hydrogencarbonate + L-glutamine + 2 ATP + H2O = carbamoyl phosphate + L-glutamate + 2 ADP + phosphate + 2 H(+). It carries out the reaction L-glutamine + H2O = L-glutamate + NH4(+). The protein operates within amino-acid biosynthesis; L-arginine biosynthesis; carbamoyl phosphate from bicarbonate: step 1/1. Its function is as follows. Small subunit of the glutamine-dependent carbamoyl phosphate synthetase (CPSase). CPSase catalyzes the formation of carbamoyl phosphate from the ammonia moiety of glutamine, carbonate, and phosphate donated by ATP, constituting the first step of the biosynthetic pathway leading to arginine and/or urea. The small subunit (glutamine amidotransferase) binds and cleaves glutamine to supply the large subunit with the substrate ammonia. This is Carbamoyl phosphate synthase arginine-specific small chain from Halalkalibacterium halodurans (strain ATCC BAA-125 / DSM 18197 / FERM 7344 / JCM 9153 / C-125) (Bacillus halodurans).